The primary structure comprises 274 residues: Eukaryotic translation initiation factor 3 subunit G (274 aa).

Residues 192 to 270 form the RRM domain; that stretch reads TAIRISNLSN…LILNVEWSKP (79 aa).

It belongs to the eIF-3 subunit G family. As to quaternary structure, component of the eukaryotic translation initiation factor 3 (eIF-3) complex.

The protein resides in the cytoplasm. In terms of biological role, RNA-binding component of the eukaryotic translation initiation factor 3 (eIF-3) complex, which is involved in protein synthesis of a specialized repertoire of mRNAs and, together with other initiation factors, stimulates binding of mRNA and methionyl-tRNAi to the 40S ribosome. The eIF-3 complex specifically targets and initiates translation of a subset of mRNAs involved in cell proliferation. This subunit can bind 18S rRNA. This Bombyx mori (Silk moth) protein is Eukaryotic translation initiation factor 3 subunit G.